We begin with the raw amino-acid sequence, 426 residues long: Adenylosuccinate synthetase (426 aa).

GTP is bound by residues 12–18 (GDEGKGK) and 40–42 (GHT). The Proton acceptor role is filled by aspartate 13. Mg(2+) is bound by residues aspartate 13 and glycine 40. Residues 13 to 16 (DEGK), 38 to 41 (NAGH), threonine 131, arginine 145, glutamine 226, threonine 241, and arginine 305 contribute to the IMP site. The active-site Proton donor is histidine 41. Position 301–307 (301–307 (ATTGRKR)) interacts with substrate. GTP contacts are provided by residues arginine 307, 333–335 (KLD), and 415–417 (SVG).

Belongs to the adenylosuccinate synthetase family. In terms of assembly, homodimer. It depends on Mg(2+) as a cofactor.

It is found in the cytoplasm. It catalyses the reaction IMP + L-aspartate + GTP = N(6)-(1,2-dicarboxyethyl)-AMP + GDP + phosphate + 2 H(+). It participates in purine metabolism; AMP biosynthesis via de novo pathway; AMP from IMP: step 1/2. In terms of biological role, plays an important role in the de novo pathway of purine nucleotide biosynthesis. Catalyzes the first committed step in the biosynthesis of AMP from IMP. The protein is Adenylosuccinate synthetase of Nitratidesulfovibrio vulgaris (strain ATCC 29579 / DSM 644 / CCUG 34227 / NCIMB 8303 / VKM B-1760 / Hildenborough) (Desulfovibrio vulgaris).